Here is a 550-residue protein sequence, read N- to C-terminus: MAAKEVKFGDSARDRMVAGVNILANAVKVTLGPKGRNVVLERSFGAPTVTKDGVSVAKEIELKDKFENMGAQMVKEVASKTSDIAGDGTTTATVLAQSIVREGMKFVAAGMNPMDLKRGIDKAVIAVTEELKKLSKPCSTNKEIAQVGSISANSDADIGEIIAKSMDKVGKEGVITVEDGKSLQNELDVVEGMQFDRGYLSPYFINNPDKQVAILENPFILLFDKKISNIRDLLPVLEQVAKAGRPLLIVAEDVEGEALATLVVNNIRGILKTCSVKAPGFGDRRKAMLEDIAVLTGGQVIAEEVGLTLEKATLAELGQAARIEIGKENTIIIDGAGEGSRIEGRVKQIRAQIEEATSDYDREKLQERVAKLAGGVAVIKVGAATEVEMKEKKARVEDALHATRAAVEEGIVPGGGVALLRARANLGTLKGDNHDQDAGIKIVLRALEQPLREIVANAGDEPSVVVNRVVEGTGNFGYNAATGEYGDLVDMGVLDPTKVERIALQNAASVAGLMLTTDCMVGELAEEKPSMGGMGGMGGMGGMGGMDMGM.

ATP-binding positions include 30–33 (TLGP), lysine 51, 87–91 (DGTTT), glycine 415, 479–481 (NAA), and aspartate 495.

The protein belongs to the chaperonin (HSP60) family. As to quaternary structure, forms a cylinder of 14 subunits composed of two heptameric rings stacked back-to-back. Interacts with the co-chaperonin GroES.

It is found in the cytoplasm. It carries out the reaction ATP + H2O + a folded polypeptide = ADP + phosphate + an unfolded polypeptide.. Together with its co-chaperonin GroES, plays an essential role in assisting protein folding. The GroEL-GroES system forms a nano-cage that allows encapsulation of the non-native substrate proteins and provides a physical environment optimized to promote and accelerate protein folding. This chain is Chaperonin GroEL, found in Aromatoleum aromaticum (strain DSM 19018 / LMG 30748 / EbN1) (Azoarcus sp. (strain EbN1)).